The chain runs to 238 residues: 1-(5-phosphoribosyl)-5-[(5-phosphoribosylamino)methylideneamino] imidazole-4-carboxamide isomerase (238 aa).

The Proton acceptor role is filled by aspartate 8. Catalysis depends on aspartate 129, which acts as the Proton donor.

This sequence belongs to the HisA/HisF family.

Its subcellular location is the cytoplasm. It catalyses the reaction 1-(5-phospho-beta-D-ribosyl)-5-[(5-phospho-beta-D-ribosylamino)methylideneamino]imidazole-4-carboxamide = 5-[(5-phospho-1-deoxy-D-ribulos-1-ylimino)methylamino]-1-(5-phospho-beta-D-ribosyl)imidazole-4-carboxamide. It participates in amino-acid biosynthesis; L-histidine biosynthesis; L-histidine from 5-phospho-alpha-D-ribose 1-diphosphate: step 4/9. The polypeptide is 1-(5-phosphoribosyl)-5-[(5-phosphoribosylamino)methylideneamino] imidazole-4-carboxamide isomerase (Lacticaseibacillus paracasei (strain ATCC 334 / BCRC 17002 / CCUG 31169 / CIP 107868 / KCTC 3260 / NRRL B-441) (Lactobacillus paracasei)).